A 182-amino-acid polypeptide reads, in one-letter code: uncharacterized protein (182 aa).

This is an uncharacterized protein from Mycobacterium tuberculosis (strain CDC 1551 / Oshkosh).